Reading from the N-terminus, the 34-residue chain is Peptide 9797 (34 aa).

In terms of tissue distribution, expressed by the venom gland.

It is found in the secreted. The protein is Peptide 9797 of Tityus stigmurus (Brazilian scorpion).